The chain runs to 600 residues: Probable pectin methyltransferase QUA3 (600 aa).

The Cytoplasmic segment spans residues 1–18; the sequence is MGHVNLPASKRGNPRQWR. A helical; Signal-anchor for type II membrane protein transmembrane segment spans residues 19 to 39; that stretch reads LLDIVTAAFFGIVLLFFILLF. The Lumenal segment spans residues 40–600; sequence TPLGDSMAAS…SLWKLPSNSH (561 aa). The N-linked (GlcNAc...) asparagine glycan is linked to N283.

It belongs to the methyltransferase superfamily. As to expression, highly expressed and abundant in suspension-cultured cells, but low levels in seedlings.

The protein resides in the golgi apparatus membrane. The protein operates within glycan metabolism; pectin biosynthesis. Its function is as follows. S-adenosyl-L-methionine (SAM)-dependent methyltransferase (MTase) which mediates the methylesterification of the pectin homogalacturonan (HG) and thus regulates cell wall biosynthesis, at least in suspension-cultured cells. In Arabidopsis thaliana (Mouse-ear cress), this protein is Probable pectin methyltransferase QUA3.